The sequence spans 665 residues: Fructose-1,6-bisphosphatase class 3 (665 aa).

This sequence belongs to the FBPase class 3 family. It depends on Mn(2+) as a cofactor.

The enzyme catalyses beta-D-fructose 1,6-bisphosphate + H2O = beta-D-fructose 6-phosphate + phosphate. Its pathway is carbohydrate biosynthesis; gluconeogenesis. The polypeptide is Fructose-1,6-bisphosphatase class 3 (Clostridium novyi (strain NT)).